A 1085-amino-acid polypeptide reads, in one-letter code: MPKRTDISNILLIGSGPIVIGQACEFDYSGTQSCKTLKSLGYRVILINSNPATVMTDPEFSHQTYIQPITPENIAAIIKKEKIDAILPTMGGQTALNAVMQMHQRGMLEGVELLGAKIEAIKKGEDRQAFKEAMLKIGMDLPKGRYAYSELEALEAISEIGFPAIIRASFTLAGGGSGVAYNIEEFQELAKNALDASPINEILIEESLLGWKEYEMEVIRDGKDNCIIVCCIENIDPMGVHTGDSITIAPSLTLTDKEYQRMRDASFAILREIGVDTGGSNVQFAIHPETLRMVVIEMNPRVSRSSALASKATGFPIAKVATMLAVGFSLDEIKNDITNTPASFEPSLDYIVVKIPRFAFEKFAGVSSTLGTSMKSIGEVMAIGGNFLEALQKALCSLENNWLGFESLSKDLEAIKKEIRRPNPKRLLYIADAFRLGVSVDEVFELCQIDRWFLSQIQKLVKAEEGINSSVLTDAKKLRGLKNLGFSDARIATKIKENENLEVSPFEVELARSNLQIAPHFEEVDTCAAEFLSLTPYLYSTYAPNPLPPIGNKQEKQEKKILIIGSGPNRIGQGIEFDYCCVHASFALKDLNIKSVMLNCNPETVSTDYDTSDTLYFEPIHFECVKSIIQRERVDGIIVHFGGQTPLKLAKDLAKMQAPIIGTPFKVIDIAEDREKFSLFLKELDIKQPENGMAKSVDEAYSIANAIGFPIIVRPSYVLGGQHMQILENIEELRHYLESVTHSLEISPKNPLLIDKFLEKAVELDVDAICDKKEVYIAGILQHIEEAGIHSGDSACFIPSTLSPEILDEIERVSAKIALHLGVVGLLNIQFAVYQNSLYLIEVNPRASRTVPFLSKALGVPLAKVATRVMVLEDLKEALKFYDKKNIVEYSKGVYKPKMPHFVALKEAVFPFNKLYGSDLILGPEMKSTGEVMGIARSLGLAFFKAQTACFNPIKNKGLIFVSIKDKDKEEACVLMKRLVELGFELCTTEGTHKALEKAGVKSLKVLKISEGRPNIMDLMMNGEISMAINTSDHKSQDDAKLIRASVLKNHVSYFTTLSAIEVLLLALEESSQEDELLALQDYLK.

The interval M1–E399 is carboxyphosphate synthetic domain. ATP contacts are provided by R127, R167, G174, E206, L208, E213, G239, V240, H241, Q283, and E297. The ATP-grasp 1 domain maps to K131–V326. 3 residues coordinate Mg(2+): Q283, E297, and N299. Mn(2+)-binding residues include Q283, E297, and N299. An oligomerization domain region spans residues N400–G551. Residues N552–F951 form a carbamoyl phosphate synthetic domain region. The ATP-grasp 2 domain maps to S678 to V871. The ATP site is built by R714, K756, L758, E763, G788, I789, H790, S791, Q830, and E842. Mg(2+)-binding residues include Q830, E842, and N844. Residues Q830, E842, and N844 each contribute to the Mn(2+) site. The MGS-like domain maps to N952–K1085. Positions N952–K1085 are allosteric domain.

Belongs to the CarB family. As to quaternary structure, composed of two chains; the small (or glutamine) chain promotes the hydrolysis of glutamine to ammonia, which is used by the large (or ammonia) chain to synthesize carbamoyl phosphate. Tetramer of heterodimers (alpha,beta)4. It depends on Mg(2+) as a cofactor. Mn(2+) serves as cofactor.

It catalyses the reaction hydrogencarbonate + L-glutamine + 2 ATP + H2O = carbamoyl phosphate + L-glutamate + 2 ADP + phosphate + 2 H(+). It carries out the reaction hydrogencarbonate + NH4(+) + 2 ATP = carbamoyl phosphate + 2 ADP + phosphate + 2 H(+). The protein operates within amino-acid biosynthesis; L-arginine biosynthesis; carbamoyl phosphate from bicarbonate: step 1/1. It participates in pyrimidine metabolism; UMP biosynthesis via de novo pathway; (S)-dihydroorotate from bicarbonate: step 1/3. Its function is as follows. Large subunit of the glutamine-dependent carbamoyl phosphate synthetase (CPSase). CPSase catalyzes the formation of carbamoyl phosphate from the ammonia moiety of glutamine, carbonate, and phosphate donated by ATP, constituting the first step of 2 biosynthetic pathways, one leading to arginine and/or urea and the other to pyrimidine nucleotides. The large subunit (synthetase) binds the substrates ammonia (free or transferred from glutamine from the small subunit), hydrogencarbonate and ATP and carries out an ATP-coupled ligase reaction, activating hydrogencarbonate by forming carboxy phosphate which reacts with ammonia to form carbamoyl phosphate. The polypeptide is Carbamoyl phosphate synthase large chain (Helicobacter pylori (strain J99 / ATCC 700824) (Campylobacter pylori J99)).